A 244-amino-acid polypeptide reads, in one-letter code: High frequency lysogenization protein HflD homolog (244 aa).

Belongs to the HflD family.

The protein resides in the cytoplasm. It is found in the cell inner membrane. This chain is High frequency lysogenization protein HflD homolog, found in Acinetobacter baumannii (strain ATCC 17978 / DSM 105126 / CIP 53.77 / LMG 1025 / NCDC KC755 / 5377).